The primary structure comprises 317 residues: Malate dehydrogenase (317 aa).

Residues 10-15 (GGGQIG) and Asp34 contribute to the NAD(+) site. Residues Arg83 and Arg89 each contribute to the substrate site. NAD(+)-binding positions include Asn96 and 119–121 (ISN). Substrate contacts are provided by Asn121 and Arg152. His176 serves as the catalytic Proton acceptor.

It belongs to the LDH/MDH superfamily. MDH type 3 family.

The enzyme catalyses (S)-malate + NAD(+) = oxaloacetate + NADH + H(+). Its function is as follows. Catalyzes the reversible oxidation of malate to oxaloacetate. The sequence is that of Malate dehydrogenase from Citrifermentans bemidjiense (strain ATCC BAA-1014 / DSM 16622 / JCM 12645 / Bem) (Geobacter bemidjiensis).